The following is a 305-amino-acid chain: Ribosomal protein L11 methyltransferase (305 aa).

4 residues coordinate S-adenosyl-L-methionine: T152, G173, D195, and N237.

Belongs to the methyltransferase superfamily. PrmA family.

It is found in the cytoplasm. It carries out the reaction L-lysyl-[protein] + 3 S-adenosyl-L-methionine = N(6),N(6),N(6)-trimethyl-L-lysyl-[protein] + 3 S-adenosyl-L-homocysteine + 3 H(+). Its function is as follows. Methylates ribosomal protein L11. The sequence is that of Ribosomal protein L11 methyltransferase from Hamiltonella defensa subsp. Acyrthosiphon pisum (strain 5AT).